The following is a 296-amino-acid chain: Phosphoribosylaminoimidazole-succinocarboxamide synthase (296 aa).

The protein belongs to the SAICAR synthetase family.

The catalysed reaction is 5-amino-1-(5-phospho-D-ribosyl)imidazole-4-carboxylate + L-aspartate + ATP = (2S)-2-[5-amino-1-(5-phospho-beta-D-ribosyl)imidazole-4-carboxamido]succinate + ADP + phosphate + 2 H(+). The protein operates within purine metabolism; IMP biosynthesis via de novo pathway; 5-amino-1-(5-phospho-D-ribosyl)imidazole-4-carboxamide from 5-amino-1-(5-phospho-D-ribosyl)imidazole-4-carboxylate: step 1/2. This chain is Phosphoribosylaminoimidazole-succinocarboxamide synthase, found in Geobacter metallireducens (strain ATCC 53774 / DSM 7210 / GS-15).